Here is a 54-residue protein sequence, read N- to C-terminus: QSTNDLIKACGRELVRLWVEICGSVSWGRTALRMTLSEKCCQVGCIRKDIARLC.

Gln-1 carries the post-translational modification Pyrrolidone carboxylic acid. 3 disulfide bridges follow: Cys-10–Cys-41, Cys-22–Cys-54, and Cys-40–Cys-45.

It belongs to the insulin family. As to quaternary structure, heterodimer of a B chain and an A chain linked by two disulfide bonds.

The protein resides in the secreted. Its function is as follows. Relaxin is an ovarian hormone that acts with estrogen to produce dilatation of the birth canal in many mammals. In Balaenoptera edeni (Pigmy Bryde's whale), this protein is Relaxin.